The primary structure comprises 139 residues: Ribulose bisphosphate carboxylase small subunit (139 aa).

It belongs to the RuBisCO small chain family. Heterohexadecamer of 8 large and 8 small subunits.

Its subcellular location is the plastid. It localises to the chloroplast. Functionally, ruBisCO catalyzes two reactions: the carboxylation of D-ribulose 1,5-bisphosphate, the primary event in carbon dioxide fixation, as well as the oxidative fragmentation of the pentose substrate in the photorespiration process. Both reactions occur simultaneously and in competition at the same active site. Although the small subunit is not catalytic it is essential for maximal activity. This is Ribulose bisphosphate carboxylase small subunit from Thalassiosira nordenskioeldii (Marine diatom).